The sequence spans 801 residues: Elongation factor G, mitochondrial (801 aa).

Residues 1–65 constitute a mitochondrion transit peptide; sequence MRVQSLLRAQ…QKIQNQRRWQ (65 aa). Residues 100–387 enclose the tr-type G domain; it reads SRVRNIGIAA…AVCDYLPNPS (288 aa). GTP contacts are provided by residues 109-116, 185-189, and 239-242; these read AHIDSGKT, DTPGH, and NKMD.

This sequence belongs to the TRAFAC class translation factor GTPase superfamily. Classic translation factor GTPase family. EF-G/EF-2 subfamily.

The protein localises to the mitochondrion. It participates in protein biosynthesis; polypeptide chain elongation. In terms of biological role, mitochondrial GTPase that catalyzes the GTP-dependent ribosomal translocation step during translation elongation. During this step, the ribosome changes from the pre-translocational (PRE) to the post-translocational (POST) state as the newly formed A-site-bound peptidyl-tRNA and P-site-bound deacylated tRNA move to the P and E sites, respectively. Catalyzes the coordinated movement of the two tRNA molecules, the mRNA and conformational changes in the ribosome. This Pyrenophora tritici-repentis (strain Pt-1C-BFP) (Wheat tan spot fungus) protein is Elongation factor G, mitochondrial (mef1).